A 281-amino-acid polypeptide reads, in one-letter code: Phosphate import ATP-binding protein PstB (281 aa).

In terms of domain architecture, ABC transporter spans F33–I276. G67–S74 provides a ligand contact to ATP.

It belongs to the ABC transporter superfamily. Phosphate importer (TC 3.A.1.7) family. The complex is composed of two ATP-binding proteins (PstB), two transmembrane proteins (PstC and PstA) and a solute-binding protein (PstS).

Its subcellular location is the cell membrane. The enzyme catalyses phosphate(out) + ATP + H2O = ADP + 2 phosphate(in) + H(+). Functionally, part of the ABC transporter complex PstSACB involved in phosphate import. Responsible for energy coupling to the transport system. The protein is Phosphate import ATP-binding protein PstB of Mycoplasma mobile (strain ATCC 43663 / 163K / NCTC 11711) (Mesomycoplasma mobile).